A 469-amino-acid chain; its full sequence is Glutamate--tRNA ligase (469 aa).

Residues 11 to 21 carry the 'HIGH' region motif; sequence PSPTGFIHLGN. Basic and acidic residues predominate over residues 114–131; sequence QREAGEKPRYDGTWRPEP. The segment at 114–139 is disordered; sequence QREAGEKPRYDGTWRPEPGKVLPEPP. A 'KMSKS' region motif is present at residues 243 to 247; that stretch reads KMSKR. Residue lysine 246 participates in ATP binding.

Belongs to the class-I aminoacyl-tRNA synthetase family. Glutamate--tRNA ligase type 1 subfamily. In terms of assembly, monomer.

The protein localises to the cytoplasm. It carries out the reaction tRNA(Glu) + L-glutamate + ATP = L-glutamyl-tRNA(Glu) + AMP + diphosphate. In terms of biological role, catalyzes the attachment of glutamate to tRNA(Glu) in a two-step reaction: glutamate is first activated by ATP to form Glu-AMP and then transferred to the acceptor end of tRNA(Glu). In Paraburkholderia phytofirmans (strain DSM 17436 / LMG 22146 / PsJN) (Burkholderia phytofirmans), this protein is Glutamate--tRNA ligase.